The chain runs to 154 residues: SsrA-binding protein (154 aa).

This sequence belongs to the SmpB family.

It is found in the cytoplasm. Required for rescue of stalled ribosomes mediated by trans-translation. Binds to transfer-messenger RNA (tmRNA), required for stable association of tmRNA with ribosomes. tmRNA and SmpB together mimic tRNA shape, replacing the anticodon stem-loop with SmpB. tmRNA is encoded by the ssrA gene; the 2 termini fold to resemble tRNA(Ala) and it encodes a 'tag peptide', a short internal open reading frame. During trans-translation Ala-aminoacylated tmRNA acts like a tRNA, entering the A-site of stalled ribosomes, displacing the stalled mRNA. The ribosome then switches to translate the ORF on the tmRNA; the nascent peptide is terminated with the 'tag peptide' encoded by the tmRNA and targeted for degradation. The ribosome is freed to recommence translation, which seems to be the essential function of trans-translation. This chain is SsrA-binding protein, found in Ruminiclostridium cellulolyticum (strain ATCC 35319 / DSM 5812 / JCM 6584 / H10) (Clostridium cellulolyticum).